A 296-amino-acid polypeptide reads, in one-letter code: Pyridoxine/pyridoxal/pyridoxamine kinase (296 aa).

Residues Ser23 and His59 each coordinate substrate. Asp125 serves as a coordination point for ATP. Position 136 (Tyr136) interacts with Mg(2+). ATP-binding positions include Thr157, Glu162, Thr195, 222 to 225 (HQRV), and Thr232. Glu162 serves as a coordination point for Mg(2+). Residue Asp234 coordinates substrate.

The protein belongs to the pyridoxine kinase family. PdxK subfamily. Homodimer. The cofactor is Mg(2+).

It catalyses the reaction pyridoxal + ATP = pyridoxal 5'-phosphate + ADP + H(+). The enzyme catalyses pyridoxine + ATP = pyridoxine 5'-phosphate + ADP + H(+). It carries out the reaction pyridoxamine + ATP = pyridoxamine 5'-phosphate + ADP + H(+). It participates in cofactor metabolism; pyridoxal 5'-phosphate salvage; pyridoxal 5'-phosphate from pyridoxal: step 1/1. It functions in the pathway cofactor metabolism; pyridoxal 5'-phosphate salvage; pyridoxine 5'-phosphate from pyridoxine: step 1/1. Its pathway is cofactor metabolism; pyridoxal 5'-phosphate salvage; pyridoxamine 5'-phosphate from pyridoxamine: step 1/1. Its function is as follows. B6-vitamer kinase involved in the salvage pathway of pyridoxal 5'-phosphate (PLP). Catalyzes the phosphorylation of pyridoxine (PN), pyridoxal (PL), and pyridoxamine (PM), forming their respective 5'-phosphorylated esters, i.e. PNP, PLP and PMP. This Bordetella avium (strain 197N) protein is Pyridoxine/pyridoxal/pyridoxamine kinase.